A 119-amino-acid polypeptide reads, in one-letter code: UPF0102 protein Nmul_A0195 (119 aa).

The protein belongs to the UPF0102 family.

The chain is UPF0102 protein Nmul_A0195 from Nitrosospira multiformis (strain ATCC 25196 / NCIMB 11849 / C 71).